Consider the following 228-residue polypeptide: tRNA (guanine-N(1)-)-methyltransferase (228 aa).

S-adenosyl-L-methionine is bound by residues glycine 108 and 127-132; that span reads VGDFIL.

This sequence belongs to the RNA methyltransferase TrmD family. Homodimer.

It is found in the cytoplasm. The enzyme catalyses guanosine(37) in tRNA + S-adenosyl-L-methionine = N(1)-methylguanosine(37) in tRNA + S-adenosyl-L-homocysteine + H(+). Its function is as follows. Specifically methylates guanosine-37 in various tRNAs. The polypeptide is tRNA (guanine-N(1)-)-methyltransferase (Metamycoplasma arthritidis (strain 158L3-1) (Mycoplasma arthritidis)).